The primary structure comprises 508 residues: tRNA-2-methylthio-N(6)-dimethylallyladenosine synthase (508 aa).

The interval M1 to K21 is disordered. One can recognise an MTTase N-terminal domain in the interval R65 to L183. [4Fe-4S] cluster is bound by residues C74, C110, C144, C220, C224, and C227. One can recognise a Radical SAM core domain in the interval R206–K436. The 64-residue stretch at K439–G502 folds into the TRAM domain.

This sequence belongs to the methylthiotransferase family. MiaB subfamily. In terms of assembly, monomer. [4Fe-4S] cluster serves as cofactor.

Its subcellular location is the cytoplasm. The enzyme catalyses N(6)-dimethylallyladenosine(37) in tRNA + (sulfur carrier)-SH + AH2 + 2 S-adenosyl-L-methionine = 2-methylsulfanyl-N(6)-dimethylallyladenosine(37) in tRNA + (sulfur carrier)-H + 5'-deoxyadenosine + L-methionine + A + S-adenosyl-L-homocysteine + 2 H(+). Its function is as follows. Catalyzes the methylthiolation of N6-(dimethylallyl)adenosine (i(6)A), leading to the formation of 2-methylthio-N6-(dimethylallyl)adenosine (ms(2)i(6)A) at position 37 in tRNAs that read codons beginning with uridine. The chain is tRNA-2-methylthio-N(6)-dimethylallyladenosine synthase from Bacillus pumilus (strain SAFR-032).